The primary structure comprises 357 residues: Outer membrane protein YedS (357 aa).

An N-terminal signal peptide occupies residues 1-21 (MKRKVLAMLVPALLVAGAANA).

The protein belongs to the Gram-negative porin family.

The protein resides in the cell outer membrane. Forms pores that allow passive diffusion of small molecules across the outer membrane. Plays a role in resistance to carbapenems; this carbapenem-resistant, noncarbapenemase-producing clinical isolate has a deletion in ompF and a mutated marR gene that does not induce expression of this protein. However if this gene is overexpressed, or if wild-type marR is introduced, this leads to decreased resistance to the carbapenem antibiotics ertapenem, imipenem and meropenem. In Escherichia coli, this protein is Outer membrane protein YedS.